We begin with the raw amino-acid sequence, 283 residues long: MPCYFWDCWPSLEIRAVLCAMGCIQSIGGKARVFREGITVIDVKASIDPIPTSIDESSSVVLRYRTPHFRASAQVVMPPIPKKETWIVGWIQACSHMEFYNQYGEQGMSSWELPDLQEGKIEAISDSDGVNYPWYGNTTETCTIVGPTKRDSKFIISMNDNFYPSVTWAVPVSESNVAKLTNIYRDQSFTTWLVATNTSTNDMIILQTLHWRMQLSIEVNPNRPLGQRARLREPIAQDQPKILSKNEPIPPSALVKPNANDAQVLMWRPKYGQPLVVIPPKHR.

The protein belongs to the FAM78 family.

This Mus musculus (Mouse) protein is Protein FAM78A (Fam78a).